A 408-amino-acid chain; its full sequence is Histidine--tRNA ligase (408 aa).

Belongs to the class-II aminoacyl-tRNA synthetase family. Homodimer.

Its subcellular location is the cytoplasm. It carries out the reaction tRNA(His) + L-histidine + ATP = L-histidyl-tRNA(His) + AMP + diphosphate + H(+). The protein is Histidine--tRNA ligase of Campylobacter jejuni subsp. jejuni serotype O:2 (strain ATCC 700819 / NCTC 11168).